A 565-amino-acid polypeptide reads, in one-letter code: MQFTHKKNRSLYIPYAGPVLLEFPLLNKGSAFSLEERSNFNLLGLLPEVVETIEEQAERAWIQYQGFKTEIDKHIYLRNIQDTNETLFYRLIGNHLEEMMPVIYTPTVGAACERFSEIYRRARGVFISYQNRHNLDDILQNVPNHNVKVIVVTDGERILGLGDQGIGGMGIPIGKLSLYTTCGGISPAYTLPIVLDVGTNNQQLLDDPLYMGWRHPRITDDEYYQFVDDVIQAIKARWPDVLLQFEDFAQKNAMPLLNRYRNEICSFNDDIQGTAAVTVGTLIAASRGAGSQLSEQKIVFLGAGSAGCGIAEQIIAQIVREGVSEEEARQRVFMVDRFGLLTDGMPNLLPFQNKLVQKREHLQGWDTTNDVLSLLDVVRNVKPNILIGVSGQPGLFTEEIIREMHKHCPRPIVMPLSNPTSRVEATPQNILSWTDGEALVATGSPFAPVTLKGKQYAIAQCNNSYIFPGIGLGVIASGASRVTDEMLMAASETLAKHSPLVNNGEGPVLPELKDIQTVSRAIAFAVGKVAQEQGVAVKTSAEALLQAISDNFWLPEYRNYRRTSI.

The active-site Proton donor is the tyrosine 104. Arginine 157 contacts NAD(+). Lysine 175 functions as the Proton acceptor in the catalytic mechanism. 3 residues coordinate a divalent metal cation: glutamate 246, aspartate 247, and aspartate 270. The NAD(+) site is built by aspartate 270 and asparagine 418.

The protein belongs to the malic enzymes family. As to quaternary structure, homotetramer. The cofactor is Mg(2+). Mn(2+) serves as cofactor.

The enzyme catalyses (S)-malate + NAD(+) = pyruvate + CO2 + NADH. The catalysed reaction is oxaloacetate + H(+) = pyruvate + CO2. In Klebsiella pneumoniae (strain 342), this protein is NAD-dependent malic enzyme.